The primary structure comprises 117 residues: MANPQRAGRLAQEVQRDVTDLLLKRINDPRVKEVTVTSVELSGDLQIATIYYSILSDLASDAKKTQAGLEAASGLIRKELGSRLTVYKTPELKFVRDTSVQYGNHIEDLIRKLHTEN.

It belongs to the RbfA family. Monomer. Binds 30S ribosomal subunits, but not 50S ribosomal subunits or 70S ribosomes.

The protein resides in the cytoplasm. Its function is as follows. One of several proteins that assist in the late maturation steps of the functional core of the 30S ribosomal subunit. Associates with free 30S ribosomal subunits (but not with 30S subunits that are part of 70S ribosomes or polysomes). Required for efficient processing of 16S rRNA. May interact with the 5'-terminal helix region of 16S rRNA. This Leuconostoc mesenteroides subsp. mesenteroides (strain ATCC 8293 / DSM 20343 / BCRC 11652 / CCM 1803 / JCM 6124 / NCDO 523 / NBRC 100496 / NCIMB 8023 / NCTC 12954 / NRRL B-1118 / 37Y) protein is Ribosome-binding factor A.